A 338-amino-acid chain; its full sequence is MKIIYPEELKQKLIKKLNYFYILLGEDSILLSKAEQLIFYFAKDKKFIEKNTINIEKSTDWNKVINFHKSKNLFFKKTILIINFTIKKLNLSLVKNINKIPLFKNKDILTVIKLNALSSLIKKSTILKILILESEIIYCSTPYEWAFKKWLQYEIKTRNLKITQESFLLLHKYYEGNTLCLNQILDILSITWPNENIKIEKIKKIINQFSIFSPVNWINAIFNKNKKKAIYILDSFFKQKYNPLILIRTLQKDLLILLNMKREKKLNINFFLKKNNISLNRSKFFANALYYIDFNNFLKIIRILLQIEIKIKKEYNNSVWIQLKTLTLLLSSPMKYTP.

It belongs to the DNA polymerase HolA subunit family. As to quaternary structure, DNA polymerase III contains a core (composed of alpha, epsilon and theta chains) that associates with a tau subunit. This core dimerizes to form the POLIII' complex. PolIII' associates with the gamma complex (composed of gamma, delta, delta', psi and chi chains) and with the beta chain to form the complete DNA polymerase III complex.

It carries out the reaction DNA(n) + a 2'-deoxyribonucleoside 5'-triphosphate = DNA(n+1) + diphosphate. In terms of biological role, DNA polymerase III is a complex, multichain enzyme responsible for most of the replicative synthesis in bacteria. This DNA polymerase also exhibits 3' to 5' exonuclease activity. The delta subunit seems to interact with the gamma subunit to transfer the beta subunit on the DNA. The polypeptide is DNA polymerase III subunit delta (holA) (Buchnera aphidicola subsp. Schizaphis graminum (strain Sg)).